Reading from the N-terminus, the 90-residue chain is Probable dynein light chain 2, cytoplasmic (90 aa).

This sequence belongs to the dynein light chain family.

The protein localises to the cytoplasm. Its subcellular location is the cytoskeleton. Its function is as follows. Acts as one of several non-catalytic accessory components of a dynein complex. This chain is Probable dynein light chain 2, cytoplasmic (dlc-2), found in Caenorhabditis elegans.